A 190-amino-acid chain; its full sequence is B3 domain-containing protein At4g01580 (190 aa).

Residues 1–25 (MVITRNMKARATSVSHRQSQQDPES) form a disordered region. Over residues 12–23 (TSVSHRQSQQDP) the composition is skewed to polar residues. Positions 29–122 (KFFKLVLPST…SFRVIIFNAS (94 aa)) form a DNA-binding region, TF-B3.

It is found in the nucleus. The sequence is that of B3 domain-containing protein At4g01580 from Arabidopsis thaliana (Mouse-ear cress).